We begin with the raw amino-acid sequence, 274 residues long: Tryptophan synthase alpha chain (274 aa).

Catalysis depends on proton acceptor residues glutamate 49 and aspartate 60.

It belongs to the TrpA family. Tetramer of two alpha and two beta chains.

It catalyses the reaction (1S,2R)-1-C-(indol-3-yl)glycerol 3-phosphate + L-serine = D-glyceraldehyde 3-phosphate + L-tryptophan + H2O. It participates in amino-acid biosynthesis; L-tryptophan biosynthesis; L-tryptophan from chorismate: step 5/5. Its function is as follows. The alpha subunit is responsible for the aldol cleavage of indoleglycerol phosphate to indole and glyceraldehyde 3-phosphate. This Gluconacetobacter diazotrophicus (strain ATCC 49037 / DSM 5601 / CCUG 37298 / CIP 103539 / LMG 7603 / PAl5) protein is Tryptophan synthase alpha chain.